The primary structure comprises 449 residues: Na(+)/H(+) antiporter NhaA 1 (449 aa).

Helical transmembrane passes span 32–52, 87–107, 114–134, 145–165, 174–194, 202–222, 233–253, 318–338, 347–367, 382–402, and 417–437; these read IEAT…TLSN, GLMT…VVLG, MVAF…GLYL, GWGV…ALLG, VFLL…VAVG, TALA…LLGV, AIIW…GVIL, WVAF…SITI, LAVM…FAWL, WGGL…ALFI, and LGIL…LCMF.

It belongs to the NhaA Na(+)/H(+) (TC 2.A.33) antiporter family.

It localises to the cell inner membrane. It carries out the reaction Na(+)(in) + 2 H(+)(out) = Na(+)(out) + 2 H(+)(in). Functionally, na(+)/H(+) antiporter that extrudes sodium in exchange for external protons. The chain is Na(+)/H(+) antiporter NhaA 1 from Acidiphilium cryptum (strain JF-5).